The following is a 421-amino-acid chain: Gamma-glutamyl phosphate reductase (421 aa).

The protein belongs to the gamma-glutamyl phosphate reductase family.

It is found in the cytoplasm. The catalysed reaction is L-glutamate 5-semialdehyde + phosphate + NADP(+) = L-glutamyl 5-phosphate + NADPH + H(+). Its pathway is amino-acid biosynthesis; L-proline biosynthesis; L-glutamate 5-semialdehyde from L-glutamate: step 2/2. Its function is as follows. Catalyzes the NADPH-dependent reduction of L-glutamate 5-phosphate into L-glutamate 5-semialdehyde and phosphate. The product spontaneously undergoes cyclization to form 1-pyrroline-5-carboxylate. The protein is Gamma-glutamyl phosphate reductase of Bordetella petrii (strain ATCC BAA-461 / DSM 12804 / CCUG 43448).